Consider the following 34-residue polypeptide: MSDIN-like toxin proprotein 7 (34 aa).

Positions 1–10 (MSDINATRLP) are excised as a propeptide. Residues 11–17 (AWLTDCP) constitute a cross-link (cyclopeptide (Ala-Pro)). A propeptide spanning residues 18–34 (CVGDDVNRLLTRGESLC) is cleaved from the precursor.

This sequence belongs to the MSDIN fungal toxin family. In terms of processing, processed by the macrocyclase-peptidase enzyme POPB to yield a toxic cyclic heptapeptide. POPB first removes 10 residues from the N-terminus. Conformational trapping of the remaining peptide forces the enzyme to release this intermediate rather than proceed to macrocyclization. The enzyme rebinds the remaining peptide in a different conformation and catalyzes macrocyclization of the N-terminal 7 residues. Expressed in basidiocarps.

Its function is as follows. Probable toxin that belongs to the MSDIN-like toxin family responsible for a large number of food poisoning cases and deaths. The chain is MSDIN-like toxin proprotein 7 from Amanita exitialis (Guangzhou destroying angel).